The following is a 259-amino-acid chain: ATP synthase subunit a (259 aa).

Helical transmembrane passes span 29-49, 90-110, 134-154, 208-228, and 230-250; these read TVNI…IWIF, IAPL…MDLI, DVNI…IYSI, LVFI…LSVP, and ALFH…LTIV.

This sequence belongs to the ATPase A chain family. F-type ATPases have 2 components, CF(1) - the catalytic core - and CF(0) - the membrane proton channel. CF(1) has five subunits: alpha(3), beta(3), gamma(1), delta(1), epsilon(1). CF(0) has three main subunits: a(1), b(2) and c(9-12). The alpha and beta chains form an alternating ring which encloses part of the gamma chain. CF(1) is attached to CF(0) by a central stalk formed by the gamma and epsilon chains, while a peripheral stalk is formed by the delta and b chains.

The protein resides in the cell inner membrane. Functionally, key component of the proton channel; it plays a direct role in the translocation of protons across the membrane. The protein is ATP synthase subunit a of Aeromonas salmonicida (strain A449).